Reading from the N-terminus, the 191-residue chain is Cytochrome b-245 light chain (191 aa).

At 2–7 (GQIEWA) the chain is on the cytoplasmic side. A helical transmembrane segment spans residues 8 to 30 (MWANEQALASGLILITGGIVATA). The Extracellular portion of the chain corresponds to 31–35 (GQFTQ). The helical transmembrane segment at 36-53 (WYLGAYSIAAGVLVCLLE) threads the bilayer. Residues 54 to 69 (YPRGKRSKGSTMERCG) are Cytoplasmic-facing. An intramembrane segment occupies 70 to 80 (QKYLTRVVKLF). At 81-86 (GPLTRN) the chain is on the cytoplasmic side. The chain crosses the membrane as a helical span at residues 87 to 104 (YYIRAFLHLGLAVPAGFL). Residue L105 is a topological domain, extracellular. The helical transmembrane segment at 106-126 (ATILGTACLAIASGIYLLAAI) threads the bilayer. The Cytoplasmic portion of the chain corresponds to 127-191 (RGEQWSPIEP…NPMPVNDEVV (65 aa)). A disordered region spans residues 134–191 (IEPKPKERPQIGGTIKQPPSNPPPRPPAEARKKLSEEAAGVPTGGPQENPMPVNDEVV). T147 bears the Phosphothreonine mark. A Glycyl lysine isopeptide (Lys-Gly) (interchain with G-Cter in ubiquitin) cross-link involves residue K149. Residue S168 is modified to Phosphoserine.

The protein belongs to the p22phox family. Component of the phagocyte NADPH oxidase core complex/cytochrome b558 complex, composed of CYBB (heavy chain (beta)) and CYBA (light chain (alpha)). Component of the phagocyte NADPH oxidase complex composed of an obligatory core heterodimer formed by the membrane proteins CYBA and CYBB and the cytosolic regulatory subunits NCF1/p47-phox, NCF2/p67-phox, NCF4/p40-phox and the small GTPase RAC1 or RAC2. Interacts with NCF1 (via SH3 domain). Interacts with SH3PXD2A. Interacts with DUOX1, DUOX2 and TPO. Interacts with NOX4; this interaction mediates superoxide generation. Interacts with calprotectin (S100A8/9). Interacts with GBP7. Interacts with NOXO1. Forms a heterodimer with NOX3 and is essential for activity and cell membrane localization of NOX3. Interacts with NOX1. Post-translationally, phosphorylation at Thr-147 enhances NADPH oxidase activity by promoting NCF1/p47-phox binding. Ubiquitinated at Lys-149 likely by RNF145.

It is found in the cell membrane. Its function is as follows. Subunit of NADPH oxidase complexes that is required for the NADPH oxidase activity that generates, in various cell types, superoxide from molecular oxygen utilizing NADPH as an electron donor. Subunit of the phagocyte NADPH oxidase complex that mediates the transfer of electrons from cytosolic NADPH to O2 to produce the superoxide anion (O2(-)). In the activated complex, electrons are first transferred from NADPH to flavin adenine dinucleotide (FAD) and subsequently transferred via two heme molecules to molecular oxygen, producing superoxide through an outer-sphere reaction. Activation of the NADPH oxidase complex is initiated by the assembly of cytosolic subunits of the NADPH oxidase complex with the core NADPH oxidase complex to form a complex at the plasma membrane or phagosomal membrane. This activation process is initiated by phosphorylation dependent binding of the cytosolic NCF1/p47-phox subunit to the C-terminus of CYBA/p22-phox. Aassociates with NOX3 to form a functional NADPH oxidase constitutively generating superoxide. The polypeptide is Cytochrome b-245 light chain (Bison bison (American bison)).